A 338-amino-acid chain; its full sequence is NADPH dehydrogenase (338 aa).

23–26 (SPMC) lines the FMN pocket. Tyr-28 contributes to the substrate binding site. Residues Ala-60 and Gln-102 each contribute to the FMN site. 164 to 167 (HGAH) serves as a coordination point for substrate. FMN contacts are provided by residues Arg-215 and 307-308 (GR).

This sequence belongs to the NADH:flavin oxidoreductase/NADH oxidase family. NamA subfamily. As to quaternary structure, homotetramer. It depends on FMN as a cofactor.

It catalyses the reaction A + NADPH + H(+) = AH2 + NADP(+). In terms of biological role, catalyzes the reduction of the double bond of an array of alpha,beta-unsaturated aldehydes and ketones. It also reduces the nitro group of nitroester and nitroaromatic compounds. It could have a role in detoxification processes. The polypeptide is NADPH dehydrogenase (Bacillus pumilus (strain SAFR-032)).